Reading from the N-terminus, the 371-residue chain is Sporulation-specific protein 2 (371 aa).

Its subcellular location is the spore wall. Its function is as follows. Essential for sporulation and seems to have a role at the time of, or after, initiation of nuclear division. Appears to have a role in outer spore wall formation. The polypeptide is Sporulation-specific protein 2 (SSP2) (Saccharomyces cerevisiae (strain ATCC 204508 / S288c) (Baker's yeast)).